The following is a 343-amino-acid chain: L-threonine 3-dehydrogenase (343 aa).

Residue cysteine 40 participates in Zn(2+) binding. Catalysis depends on charge relay system residues threonine 42 and histidine 45. The Zn(2+) site is built by histidine 65, glutamate 66, cysteine 95, cysteine 98, cysteine 101, and cysteine 109. NAD(+) is bound by residues isoleucine 177, aspartate 197, arginine 202, leucine 264–isoleucine 266, and isoleucine 288–tyrosine 289.

The protein belongs to the zinc-containing alcohol dehydrogenase family. In terms of assembly, homotetramer. Zn(2+) is required as a cofactor.

It localises to the cytoplasm. The catalysed reaction is L-threonine + NAD(+) = (2S)-2-amino-3-oxobutanoate + NADH + H(+). It functions in the pathway amino-acid degradation; L-threonine degradation via oxydo-reductase pathway; glycine from L-threonine: step 1/2. Its function is as follows. Catalyzes the NAD(+)-dependent oxidation of L-threonine to 2-amino-3-ketobutyrate. The polypeptide is L-threonine 3-dehydrogenase (Aliivibrio fischeri (strain ATCC 700601 / ES114) (Vibrio fischeri)).